The following is a 349-amino-acid chain: Hydroxymethylglutaryl-CoA synthase (349 aa).

D30 contributes to the (3S)-3-hydroxy-3-methylglutaryl-CoA binding site. The active-site Proton donor/acceptor is the E82. (3S)-3-hydroxy-3-methylglutaryl-CoA is bound at residue C114. C114 (acyl-thioester intermediate) is an active-site residue. R203 lines the CoA pocket. (3S)-3-hydroxy-3-methylglutaryl-CoA is bound by residues T205 and H238. The Proton donor/acceptor role is filled by H238. Residue K243 participates in CoA binding. Positions 247, 270, and 300 each coordinate (3S)-3-hydroxy-3-methylglutaryl-CoA.

The protein belongs to the thiolase-like superfamily. Archaeal HMG-CoA synthase family. In terms of assembly, interacts with acetoacetyl-CoA thiolase that catalyzes the precedent step in the pathway and with a DUF35 protein. The acetoacetyl-CoA thiolase/HMG-CoA synthase complex channels the intermediate via a fused CoA-binding site, which allows for efficient coupling of the endergonic thiolase reaction with the exergonic HMGCS reaction.

The catalysed reaction is acetoacetyl-CoA + acetyl-CoA + H2O = (3S)-3-hydroxy-3-methylglutaryl-CoA + CoA + H(+). It functions in the pathway metabolic intermediate biosynthesis; (R)-mevalonate biosynthesis; (R)-mevalonate from acetyl-CoA: step 2/3. In terms of biological role, catalyzes the condensation of acetyl-CoA with acetoacetyl-CoA to form 3-hydroxy-3-methylglutaryl-CoA (HMG-CoA). Functions in the mevalonate (MVA) pathway leading to isopentenyl diphosphate (IPP), a key precursor for the biosynthesis of isoprenoid compounds that are building blocks of archaeal membrane lipids. The protein is Hydroxymethylglutaryl-CoA synthase of Methanothermococcus thermolithotrophicus (Methanococcus thermolithotrophicus).